The primary structure comprises 247 residues: Myeloid leukemia factor 2 (247 aa).

Residues 122–247 (ETSEMRSAPG…PSRQSRRYDW (126 aa)) are disordered. The span at 134-144 (RETRRTVRDSD) shows a compositional bias: basic and acidic residues. Over residues 154 to 169 (HHIRDRAHILQRSRNH) the composition is skewed to basic residues. Residues 170–179 (RTGDQEERQD) are compositionally biased toward basic and acidic residues. A compositionally biased stretch (acidic residues) spans 182–192 (NLDESEAAAFD). Residues 193-225 (DEWRRETSRYRQQRPLEFRRHEASVGGGRRAEG) show a composition bias toward basic and acidic residues. A phosphoserine mark is found at serine 216, serine 237, and serine 239.

It belongs to the MLF family.

It localises to the cytoplasm. The protein localises to the nucleus. The sequence is that of Myeloid leukemia factor 2 (Mlf2) from Mus musculus (Mouse).